A 162-amino-acid chain; its full sequence is Large ribosomal subunit protein uL10 (162 aa).

Belongs to the universal ribosomal protein uL10 family. Part of the ribosomal stalk of the 50S ribosomal subunit. The N-terminus interacts with L11 and the large rRNA to form the base of the stalk. The C-terminus forms an elongated spine to which L12 dimers bind in a sequential fashion forming a multimeric L10(L12)X complex.

Functionally, forms part of the ribosomal stalk, playing a central role in the interaction of the ribosome with GTP-bound translation factors. The polypeptide is Large ribosomal subunit protein uL10 (Vibrio parahaemolyticus serotype O3:K6 (strain RIMD 2210633)).